The chain runs to 575 residues: Adenine deaminase (575 aa).

It belongs to the metallo-dependent hydrolases superfamily. Adenine deaminase family. Mn(2+) serves as cofactor.

The catalysed reaction is adenine + H2O + H(+) = hypoxanthine + NH4(+). This is Adenine deaminase from Nitratidesulfovibrio vulgaris (strain DP4) (Desulfovibrio vulgaris).